We begin with the raw amino-acid sequence, 106 residues long: Nucleoid-associated protein PD_1058 (106 aa).

This sequence belongs to the YbaB/EbfC family. As to quaternary structure, homodimer.

It localises to the cytoplasm. The protein resides in the nucleoid. Functionally, binds to DNA and alters its conformation. May be involved in regulation of gene expression, nucleoid organization and DNA protection. The polypeptide is Nucleoid-associated protein PD_1058 (Xylella fastidiosa (strain Temecula1 / ATCC 700964)).